The sequence spans 511 residues: Cytochrome P450 76C4 (511 aa).

The chain crosses the membrane as a helical span at residues 3-23; sequence IISGQALFLLFCFISSCFLIS. Cys-450 provides a ligand contact to heme.

The protein belongs to the cytochrome P450 family. It depends on heme as a cofactor.

It localises to the membrane. The polypeptide is Cytochrome P450 76C4 (CYP76C4) (Arabidopsis thaliana (Mouse-ear cress)).